Consider the following 284-residue polypeptide: uncharacterized protein (284 aa).

The N-terminal stretch at 1-23 (MKRGCAIAVMICGLITSVSAASA) is a signal peptide.

Belongs to the surface antigen msp4 family.

This is an uncharacterized protein from Brucella suis biovar 1 (strain 1330).